The chain runs to 41 residues: Photosystem I reaction center subunit IX (41 aa).

A helical membrane pass occupies residues 7–27; the sequence is YLSTAPVLLTLWMTFTAGFII.

It belongs to the PsaJ family.

The protein localises to the plastid. It localises to the chloroplast thylakoid membrane. Functionally, may help in the organization of the PsaE and PsaF subunits. This Trieres chinensis (Marine centric diatom) protein is Photosystem I reaction center subunit IX.